Consider the following 217-residue polypeptide: Thiamine-phosphate synthase (217 aa).

4-amino-2-methyl-5-(diphosphooxymethyl)pyrimidine contacts are provided by residues 39-43 (QLRRK) and Asn-71. Mg(2+) is bound by residues Asp-72 and Asp-91. Ser-110 is a 4-amino-2-methyl-5-(diphosphooxymethyl)pyrimidine binding site. A 2-[(2R,5Z)-2-carboxy-4-methylthiazol-5(2H)-ylidene]ethyl phosphate-binding site is contributed by 137-139 (SPT). Lys-140 contributes to the 4-amino-2-methyl-5-(diphosphooxymethyl)pyrimidine binding site. 2-[(2R,5Z)-2-carboxy-4-methylthiazol-5(2H)-ylidene]ethyl phosphate contacts are provided by residues Gly-173 and 193 to 194 (IS).

Belongs to the thiamine-phosphate synthase family. It depends on Mg(2+) as a cofactor.

It catalyses the reaction 2-[(2R,5Z)-2-carboxy-4-methylthiazol-5(2H)-ylidene]ethyl phosphate + 4-amino-2-methyl-5-(diphosphooxymethyl)pyrimidine + 2 H(+) = thiamine phosphate + CO2 + diphosphate. The catalysed reaction is 2-(2-carboxy-4-methylthiazol-5-yl)ethyl phosphate + 4-amino-2-methyl-5-(diphosphooxymethyl)pyrimidine + 2 H(+) = thiamine phosphate + CO2 + diphosphate. It carries out the reaction 4-methyl-5-(2-phosphooxyethyl)-thiazole + 4-amino-2-methyl-5-(diphosphooxymethyl)pyrimidine + H(+) = thiamine phosphate + diphosphate. The protein operates within cofactor biosynthesis; thiamine diphosphate biosynthesis; thiamine phosphate from 4-amino-2-methyl-5-diphosphomethylpyrimidine and 4-methyl-5-(2-phosphoethyl)-thiazole: step 1/1. Condenses 4-methyl-5-(beta-hydroxyethyl)thiazole monophosphate (THZ-P) and 2-methyl-4-amino-5-hydroxymethyl pyrimidine pyrophosphate (HMP-PP) to form thiamine monophosphate (TMP). The polypeptide is Thiamine-phosphate synthase (Bordetella bronchiseptica (strain ATCC BAA-588 / NCTC 13252 / RB50) (Alcaligenes bronchisepticus)).